The sequence spans 313 residues: Olfactory receptor 1G1 (313 aa).

Topologically, residues 1-25 are extracellular; the sequence is MEGKNLTSISEFFLLGFSEQLEEQK. N5 carries N-linked (GlcNAc...) asparagine glycosylation. The chain crosses the membrane as a helical span at residues 26–49; it reads ALFGSFLFMYLVMVAGNLLIILVI. At 50-57 the chain is on the cytoplasmic side; that stretch reads ITDTQLHT. The helical transmembrane segment at 58 to 79 threads the bilayer; the sequence is PMYFFLANLSLADACFVSTTVP. The Extracellular portion of the chain corresponds to 80 to 100; sequence KMLANIQIQSQAISYSGCLLQ. A disulfide bridge connects residues C97 and C189. A helical membrane pass occupies residues 101–120; it reads LYFFMLFVMLEAFLLAVMAY. Over 121–140 the chain is Cytoplasmic; the sequence is DHYVAICHPLHYILIMSPGL. The helical transmembrane segment at 141–158 threads the bilayer; the sequence is CVFLVSASWIMNALYSLL. At 159–196 the chain is on the extracellular side; that stretch reads HTLLMNSLSFCANHEIPHFFCDIDPLLSLSCADPFTNE. A helical transmembrane segment spans residues 197-219; it reads LVIFITGGLTGLICVLCLIISYT. The Cytoplasmic segment spans residues 220–236; that stretch reads NVFSTILKIPSAQGKRK. A helical membrane pass occupies residues 237-259; sequence AFSTCSSHLSVVSLFXGTSFCVY. Residues 260–272 are Extracellular-facing; that stretch reads FSPPSTRXAQKDT. Residues 273-292 form a helical membrane-spanning segment; the sequence is VASVMYTVVTPMLNPFIYSL. Over 293–313 the chain is Cytoplasmic; the sequence is RNQEIKSSLRKLIWVRKIHSP.

Belongs to the G-protein coupled receptor 1 family.

It localises to the cell membrane. Functionally, odorant receptor. In Pan troglodytes (Chimpanzee), this protein is Olfactory receptor 1G1 (OR1G1).